The following is a 159-amino-acid chain: MKKMHGFTLIELMIVVAIIGVLASIALMQYQNFVVRSQVTRVLMEAGELRLAVEQCLNDGTTTVGNGANECDPRASGSNIISGASQNPEIVIAANTGVVQFPNPLTEETALTATFNNSAASIIHGKKLIWQRQKSGSWYCHSNAAEKFLPSGCKYDASL.

Residues 1–6 (MKKMHG) constitute a propeptide, leader sequence. Phe-7 is modified (N-methylphenylalanine). Residues 7–29 (FTLIELMIVVAIIGVLASIALMQ) form a helical membrane-spanning segment. 2 cysteine pairs are disulfide-bonded: Cys-56/Cys-71 and Cys-140/Cys-153.

This sequence belongs to the N-Me-Phe pilin family. The pili are polar flexible filaments of about 5.4 nanometers diameter and 2.5 micrometers average length; they consist of only a single polypeptide chain arranged in a helical configuration of five subunits per turn in the assembled pilus.

It is found in the fimbrium. It localises to the membrane. The sequence is that of Probable minor fimbrial protein (fimZ) from Dichelobacter nodosus (Bacteroides nodosus).